The primary structure comprises 193 residues: BH3-interacting domain death agonist (193 aa).

Positions 87–101 (IAAQLAEIGDQLDKQ) match the BH3 motif.

In terms of assembly, forms heterodimers either with the pro-apoptotic protein BAX or the anti-apoptotic protein Bcl-2.

It is found in the cytoplasm. Its subcellular location is the mitochondrion outer membrane. In terms of biological role, induces caspases and apoptosis. Counters the protective effect of Bcl-2. The chain is BH3-interacting domain death agonist (BID) from Gallus gallus (Chicken).